We begin with the raw amino-acid sequence, 229 residues long: Potassium/proton antiporter CemA (229 aa).

A run of 3 helical transmembrane segments spans residues leucine 7 to phenylalanine 27, leucine 106 to leucine 126, and leucine 193 to leucine 213.

This sequence belongs to the CemA family.

The protein localises to the plastid. It localises to the chloroplast inner membrane. The catalysed reaction is K(+)(in) + H(+)(out) = K(+)(out) + H(+)(in). Functionally, contributes to K(+)/H(+) antiport activity by supporting proton efflux to control proton extrusion and homeostasis in chloroplasts in a light-dependent manner to modulate photosynthesis. Prevents excessive induction of non-photochemical quenching (NPQ) under continuous-light conditions. Indirectly promotes efficient inorganic carbon uptake into chloroplasts. The chain is Potassium/proton antiporter CemA from Illicium oligandrum (Star anise).